The following is an 864-amino-acid chain: E3 ubiquitin-protein ligase Itchy (864 aa).

The C2 domain maps to 1–115; the sequence is MSDSGPQLDS…LKSNNMKLEE (115 aa). Ser-2 is subject to N-acetylserine. Residues 151–164 show a composition bias toward polar residues; sequence NGETSCSESTTQND. Positions 151 to 294 are disordered; that stretch reads NGETSCSEST…SQAPLPPGWE (144 aa). Basic and acidic residues predominate over residues 165-174; the sequence is DGCRTRDDTR. Low complexity predominate over residues 195 to 206; that stretch reads NGNNSPSLSNGG. A Phosphoserine; by MAPK8 modification is found at Ser-199. The span at 210–224 shows a compositional bias: pro residues; it reads SRPPRPSRPPPPTPR. Thr-222 is subject to Phosphothreonine; by MAPK8. Positions 230–259 are enriched in low complexity; that stretch reads NGSPSTNSDSDGSSTGSLPPTNTNVNTSTS. Phosphoserine; by MAPK8 is present on Ser-232. WW domains are found at residues 287-320 and 319-352; these read APLP…RPEP and EPLP…RPTL. Thr-346 carries the post-translational modification Phosphothreonine; by SGK3. The required for interaction with FYN stretch occupies residues 356–432; it reads RNYEQWQLQR…RITQWEDPRS (77 aa). Phosphotyrosine; by FYN is present on Tyr-381. WW domains follow at residues 399-432 and 439-472; these read GPLP…DPRS and KPLP…DPRT. The residue at position 411 (Ser-411) is a Phosphoserine; by SGK3. One can recognise an HECT domain in the interval 530–864; the sequence is SPQDLRRRLW…IEETEGFGQE (335 aa). An MAP kinase docking site region spans residues 535–544; the sequence is RRRLWVIFPG. The active-site Glycyl thioester intermediate is Cys-832.

Monomer. Part of a ternary complex composed of SMAD3, ITCH/AIP4 and NEDD9/HEF1; within the complex NEDD9/HEF1 interacts (via N-terminus) with ITCH/AIP4 (via WW domains); the complex mediates ubiquitination and proteasomal degradation of NEDD9/HEF1. Interacts (via WW domains) with OCNL. Interacts (via WW domains) with NOTCH1. Interacts (via WW domains) JUN. Interacts with JUNB; the interaction promotes ITCH-mediated ubiquitination and degradation of JUNB. Interacts with FYN; the interaction phosphorylates ITCH on Tyr-381 decreasing binding of JUNB. Interacts (via WW domain 2) with N4BP1; the interaction inhibits the E3 ubiquitin-protein ligase activity. Interacts with NDFIP1 and NDFIP2; the interaction with NDFIP proteins activates the E3 ubiquitin-protein ligase and may induce its recruitment to exosomes. Interacts with ARHGEF7. Interacts with RNF11. Interacts (via the WW 1 domain) with NFE2 (via the PXY motif 1); the interaction promotes 'Lys-63'-linked ubiquitination of NFE2, retains it in the cytoplasm and prevents its transactivation activity. Interacts (via WW domains) with CXCR4 (via C-terminus); the interaction depends on CXCR4 phosphorylation. Found in a complex with E3 ligase DTX3L and ESCRT-0 components HGS and STAM. Interacts with DTX3L (via C-terminus); the interaction is increased upon CXCL12 stimulation and inhibits ITCH catalytic activity (the interaction is direct). Interacts with HGS. Interacts (via WW domains) with PCBP2 within a complex containing ITCH, MAVS and PCBP2. Interacts (via WW domains) with TXNIP (via C-terminus). Interacts with p15 BID. Interacts with ERBB4. Interacts with DTX1. Interacts with SPART. Interacts with SNX9 and SNX18. Interacts (via its WW domains) with ATN1. Interacts (via WW domains) with SGK3. Interacts with CBLC. Interacts with OTUD7B. Interacts (via WW domain 1,2 and 3) with PI4K2A; the interaction inhibits PI4K2A catalytic activity and promotes ITCH catalytic activity. Interacts with ARRDC4. Part of a complex containing ITCH, NDFIP1 and MAP3K7. Interacts with UBE2L3; the interaction is mediated by NDFIP1. Interacts with MAPK8/JNK1. Interacts (via WW domains) with ARRDC1 (via PPxY motifs); the interaction is direct and participates in the recruitment of the ubiquitin-protein ligase ITCH to the NOTCH1 receptor. Interacts (via WW domains) with ARRDC2. Interacts (via WW domains) with ARRDC3. Interacts directly with LDLRAD3; this interaction promotes ITCH auto-ubiquitination leading to its degradation. Interacts with ENTREP1; enhances the ubiquitination of CXCR4 by ITCH and its subsequent endocytosis. Interacts with USP12 and WDR48/UAF1; the interaction is more efficient when both USP12 and WDR48/UAF1 are involved and may facilitate the recruitment of the USP12 deubiquitinase complex to Notch. As to quaternary structure, (Microbial infection) Interacts with Epstein-Barr virus LMP2A. On T-cell activation, phosphorylation by the JNK cascade on serine and threonine residues surrounding the PRR domain accelerates the ubiquitination and degradation of JUN and JUNB. The increased ITCH catalytic activity due to phosphorylation by JNK1 may occur due to a conformational change disrupting the interaction between the PRR/WW motifs domain and the HECT domain and, thus exposing the HECT domain. Phosphorylation by FYN reduces interaction with JUNB and negatively controls JUN ubiquitination and degradation. Interacts directly with LDLRAD3; this interaction promotes ITCH auto-ubiquitination leading to its degradation. In terms of processing, monoubiquitinated. Autopolyubiquitinated with 'Lys-63' linkages which does not lead to protein degradation. Detected in uterus (at protein level). Widely expressed.

The protein localises to the cell membrane. It is found in the cytoplasm. It localises to the nucleus. Its subcellular location is the early endosome membrane. The protein resides in the endosome membrane. The catalysed reaction is S-ubiquitinyl-[E2 ubiquitin-conjugating enzyme]-L-cysteine + [acceptor protein]-L-lysine = [E2 ubiquitin-conjugating enzyme]-L-cysteine + N(6)-ubiquitinyl-[acceptor protein]-L-lysine.. The protein operates within protein modification; protein ubiquitination. Its activity is regulated as follows. Activated by NDFIP1- and NDFIP2-binding. Activated by PI4K2A-binding. Inhibited by DTX3L-binding. Inhibited by N4BP1 binding. Acts as an E3 ubiquitin-protein ligase which accepts ubiquitin from an E2 ubiquitin-conjugating enzyme in the form of a thioester and then directly transfers the ubiquitin to targeted substrates. It catalyzes 'Lys-29'-, 'Lys-48'- and 'Lys-63'-linked ubiquitin conjugation. Involved in the control of inflammatory signaling pathways. Is an essential component of a ubiquitin-editing protein complex, comprising also TNFAIP3, TAX1BP1 and RNF11, that ensures the transient nature of inflammatory signaling pathways. Promotes the association of the complex after TNF stimulation. Once the complex is formed, TNFAIP3 deubiquitinates 'Lys-63' polyubiquitin chains on RIPK1 and catalyzes the formation of 'Lys-48'-polyubiquitin chains. This leads to RIPK1 proteasomal degradation and consequently termination of the TNF- or LPS-mediated activation of NFKB1. Ubiquitinates RIPK2 by 'Lys-63'-linked conjugation and influences NOD2-dependent signal transduction pathways. Regulates the transcriptional activity of several transcription factors involved in immune response. Ubiquitinates NFE2 by 'Lys-63' linkages and is implicated in the control of the development of hematopoietic lineages. Mediates JUN ubiquitination and degradation. Mediates JUNB ubiquitination and degradation. Critical regulator of type 2 helper T (Th2) cell cytokine production by inducing JUNB ubiquitination and degradation. Involved in the negative regulation of MAVS-dependent cellular antiviral responses. Ubiquitinates MAVS through 'Lys-48'-linked conjugation resulting in MAVS proteasomal degradation. Following ligand stimulation, regulates sorting of Wnt receptor FZD4 to the degradative endocytic pathway probably by modulating PI42KA activity. Ubiquitinates PI4K2A and negatively regulates its catalytic activity. Ubiquitinates chemokine receptor CXCR4 and regulates sorting of CXCR4 to the degradative endocytic pathway following ligand stimulation by ubiquitinating endosomal sorting complex required for transport ESCRT-0 components HGS and STAM. Targets DTX1 for lysosomal degradation and controls NOTCH1 degradation, in the absence of ligand, through 'Lys-29'-linked polyubiquitination. Ubiquitinates SNX9. Ubiquitinates MAP3K7 through 'Lys-48'-linked conjugation. Together with UBR5, involved in the regulation of apoptosis and reactive oxygen species levels through the ubiquitination and proteasomal degradation of TXNIP: catalyzes 'Lys-48'-/'Lys-63'-branched ubiquitination of TXNIP. ITCH synthesizes 'Lys-63'-linked chains, while UBR5 is branching multiple 'Lys-48'-linked chains of substrate initially modified. Mediates the antiapoptotic activity of epidermal growth factor through the ubiquitination and proteasomal degradation of p15 BID. Ubiquitinates BRAT1 and this ubiquitination is enhanced in the presence of NDFIP1. Ubiquitinates NEDD9/HEF1, resulting in proteasomal degradation of NEDD9/HEF1. The chain is E3 ubiquitin-protein ligase Itchy (Itch) from Mus musculus (Mouse).